The primary structure comprises 388 residues: Succinate--CoA ligase [ADP-forming] subunit beta (388 aa).

The region spanning 9-244 (KEILRKFGVA…LDEEDPAEIE (236 aa)) is the ATP-grasp domain. ATP is bound by residues Lys46, 53–55 (GRG), Glu99, Ala102, and Glu107. Residues Asn199 and Asp213 each contribute to the Mg(2+) site. Residues Asn264 and 321-323 (GIM) contribute to the substrate site.

This sequence belongs to the succinate/malate CoA ligase beta subunit family. In terms of assembly, heterotetramer of two alpha and two beta subunits. The cofactor is Mg(2+).

It catalyses the reaction succinate + ATP + CoA = succinyl-CoA + ADP + phosphate. The catalysed reaction is GTP + succinate + CoA = succinyl-CoA + GDP + phosphate. It functions in the pathway carbohydrate metabolism; tricarboxylic acid cycle; succinate from succinyl-CoA (ligase route): step 1/1. Functionally, succinyl-CoA synthetase functions in the citric acid cycle (TCA), coupling the hydrolysis of succinyl-CoA to the synthesis of either ATP or GTP and thus represents the only step of substrate-level phosphorylation in the TCA. The beta subunit provides nucleotide specificity of the enzyme and binds the substrate succinate, while the binding sites for coenzyme A and phosphate are found in the alpha subunit. This Burkholderia multivorans (strain ATCC 17616 / 249) protein is Succinate--CoA ligase [ADP-forming] subunit beta.